Reading from the N-terminus, the 334-residue chain is Fructose-1,6-bisphosphatase class 1 (334 aa).

Mg(2+) contacts are provided by glutamate 89, aspartate 112, leucine 114, and aspartate 115. Residues 115–118 (DGSS), asparagine 208, tyrosine 241, and lysine 271 each bind substrate. Position 277 (glutamate 277) interacts with Mg(2+).

The protein belongs to the FBPase class 1 family. Homotetramer. The cofactor is Mg(2+).

It localises to the cytoplasm. It carries out the reaction beta-D-fructose 1,6-bisphosphate + H2O = beta-D-fructose 6-phosphate + phosphate. It functions in the pathway carbohydrate biosynthesis; gluconeogenesis. This Photorhabdus laumondii subsp. laumondii (strain DSM 15139 / CIP 105565 / TT01) (Photorhabdus luminescens subsp. laumondii) protein is Fructose-1,6-bisphosphatase class 1.